Reading from the N-terminus, the 194-residue chain is Ras-related protein Rab-22A (194 aa).

12–20 (GDTGVGKSS) is a GTP binding site. The Effector region signature appears at 34-42 (INPTIGASF). Residues 60-64 (DTAGQ), 118-121 (NKCD), and 148-150 (SAK) each bind GTP. Residues 170-194 (DANPASGGKGFKLRRQPSEPKRSCC) form a disordered region. Over residues 185–194 (QPSEPKRSCC) the composition is skewed to basic and acidic residues. S-geranylgeranyl cysteine attachment occurs at residues Cys193 and Cys194.

Belongs to the small GTPase superfamily. Rab family. Binds EEA1. Interacts (in its GTP-bound form) with RINL. Interacts directly with ZFYVE20. Interacts (in its GTP-bound form) with RABGEF1. As to expression, detected in brain and heart, and at lower levels in lung and spleen.

It localises to the endosome membrane. It is found in the cell membrane. Its subcellular location is the early endosome. The protein localises to the late endosome. The protein resides in the cell projection. It localises to the ruffle. It is found in the cytoplasmic vesicle. Its subcellular location is the phagosome. The protein localises to the phagosome membrane. Functionally, plays a role in endocytosis and intracellular protein transport. Mediates trafficking of TF from early endosomes to recycling endosomes. Required for NGF-mediated endocytosis of NTRK1, and subsequent neurite outgrowth. Binds GTP and GDP and has low GTPase activity. Alternates between a GTP-bound active form and a GDP-bound inactive form. This is Ras-related protein Rab-22A (Rab22a) from Mus musculus (Mouse).